Consider the following 299-residue polypeptide: Coenzyme PQQ synthesis protein B (299 aa).

This sequence belongs to the PqqB family.

Its pathway is cofactor biosynthesis; pyrroloquinoline quinone biosynthesis. In terms of biological role, may be involved in the transport of PQQ or its precursor to the periplasm. The chain is Coenzyme PQQ synthesis protein B from Methylorubrum extorquens (strain PA1) (Methylobacterium extorquens).